A 284-amino-acid polypeptide reads, in one-letter code: tRNA pseudouridine synthase B (284 aa).

The active-site Nucleophile is Asp40.

It belongs to the pseudouridine synthase TruB family. Type 1 subfamily.

It catalyses the reaction uridine(55) in tRNA = pseudouridine(55) in tRNA. In terms of biological role, responsible for synthesis of pseudouridine from uracil-55 in the psi GC loop of transfer RNAs. The polypeptide is tRNA pseudouridine synthase B (Helicobacter hepaticus (strain ATCC 51449 / 3B1)).